The following is a 204-amino-acid chain: Urease accessory protein UreG 1 (204 aa).

14–21 (GPVGSGKT) serves as a coordination point for GTP.

Belongs to the SIMIBI class G3E GTPase family. UreG subfamily. Homodimer. UreD, UreF and UreG form a complex that acts as a GTP-hydrolysis-dependent molecular chaperone, activating the urease apoprotein by helping to assemble the nickel containing metallocenter of UreC. The UreE protein probably delivers the nickel.

The protein localises to the cytoplasm. Functionally, facilitates the functional incorporation of the urease nickel metallocenter. This process requires GTP hydrolysis, probably effectuated by UreG. The sequence is that of Urease accessory protein UreG 1 from Methylorubrum extorquens (strain PA1) (Methylobacterium extorquens).